We begin with the raw amino-acid sequence, 217 residues long: Monomethylamine corrinoid protein 2 (217 aa).

One can recognise a B12-binding N-terminal domain in the interval 1 to 91; sequence MTNTEIFDKL…ELEKNKKEGD (91 aa). One can recognise a B12-binding domain in the interval 93–217; sequence AGLAITFVAE…AAKVALEVMK (125 aa). Position 106 (His106) interacts with methylcob(III)alamin.

Belongs to the methylamine corrinoid protein family. As to quaternary structure, can form a complex with MtmB.

It participates in one-carbon metabolism; methanogenesis from methylamine. Functionally, acts as a methyl group carrier between MtmB and MtbA. This Methanosarcina barkeri protein is Monomethylamine corrinoid protein 2 (mtmC2).